The sequence spans 328 residues: Ribose-phosphate pyrophosphokinase (328 aa).

ATP is bound by residues 39–41 (DGE) and 98–99 (RQ). Mg(2+) is bound by residues H132 and D172. K195 is an active-site residue. D-ribose 5-phosphate is bound by residues R197, D221, and 225–229 (DTGGT).

It belongs to the ribose-phosphate pyrophosphokinase family. Class I subfamily. As to quaternary structure, homohexamer. Mg(2+) is required as a cofactor.

It is found in the cytoplasm. The enzyme catalyses D-ribose 5-phosphate + ATP = 5-phospho-alpha-D-ribose 1-diphosphate + AMP + H(+). Its pathway is metabolic intermediate biosynthesis; 5-phospho-alpha-D-ribose 1-diphosphate biosynthesis; 5-phospho-alpha-D-ribose 1-diphosphate from D-ribose 5-phosphate (route I): step 1/1. Involved in the biosynthesis of the central metabolite phospho-alpha-D-ribosyl-1-pyrophosphate (PRPP) via the transfer of pyrophosphoryl group from ATP to 1-hydroxyl of ribose-5-phosphate (Rib-5-P). The polypeptide is Ribose-phosphate pyrophosphokinase (Mycoplasma pneumoniae (strain ATCC 29342 / M129 / Subtype 1) (Mycoplasmoides pneumoniae)).